We begin with the raw amino-acid sequence, 204 residues long: RNA-free ribonuclease P (204 aa).

This sequence belongs to the HARP family.

It carries out the reaction Endonucleolytic cleavage of RNA, removing 5'-extranucleotides from tRNA precursor.. RNA-free RNase P that catalyzes the removal of the 5'-leader sequence from pre-tRNA to produce the mature 5'-terminus. The chain is RNA-free ribonuclease P from Pyrococcus horikoshii (strain ATCC 700860 / DSM 12428 / JCM 9974 / NBRC 100139 / OT-3).